Reading from the N-terminus, the 23-residue chain is Phallacidin proprotein 1 (23 aa).

Pro1 is a propeptide. A cross-link (cyclopeptide (Ala-Pro)) is located at residues 2–8; sequence AWLVDCP. Residues 3–7 constitute a cross-link (2'-cysteinyl-6'-hydroxytryptophan sulfoxide (Trp-Cys)); that stretch reads WLVDC. Residues 9–23 constitute a propeptide that is removed on maturation; that stretch reads CVGDDVNRLLTRGER.

Belongs to the MSDIN fungal toxin family. Processed by the macrocyclase-peptidase enzyme POPB to yield a toxic cyclic heptapeptide. POPB first removes 10 residues from the N-terminus. Conformational trapping of the remaining peptide forces the enzyme to release this intermediate rather than proceed to macrocyclization. The enzyme rebinds the remaining peptide in a different conformation and catalyzes macrocyclization of the N-terminal 7 residues.

Toxin that belongs to the bicyclic heptapeptides called phallotoxins. Although structurally related to amatoxins, phallotoxins have a different mode of action, which is the stabilization of F-actin. Phallotoxins are poisonous when administered parenterally, but not orally because of poor absorption. In Amanita exitialis (Guangzhou destroying angel), this protein is Phallacidin proprotein 1.